We begin with the raw amino-acid sequence, 750 residues long: Cation-transporting P-type ATPase B (750 aa).

An HMA domain is found at 17–80; the sequence is RRIQLDVAGM…VIEQAGYRAT (64 aa). Positions 28 and 31 each coordinate a metal cation. A run of 6 helical transmembrane segments spans residues 104-124, 129-149, 167-187, 200-220, 360-380, and 389-409; these read LIVA…FAIV, FPGW…WAAW, ETLI…TIFV, AILH…VFVL, IAAV…ASWL, and AFSV…GLAT. The active-site 4-aspartylphosphate intermediate is the Asp445. Transmembrane regions (helical) follow at residues 471 to 491, 500 to 520, 547 to 567, 663 to 683, 693 to 713, and 715 to 735; these read VLAL…TAIV, VADF…EHHV, SRGE…AVAI, VAIG…VPVA, TIRI…PIAS, and GLLN…FVVS.

The protein belongs to the cation transport ATPase (P-type) (TC 3.A.3) family. Type IB subfamily.

The protein localises to the cell membrane. The catalysed reaction is ATP + H2O = ADP + phosphate + H(+). In Mycobacterium leprae (strain TN), this protein is Cation-transporting P-type ATPase B (ctpB).